A 1770-amino-acid chain; its full sequence is Transposon Ty2-GR1 Gag-Pol polyprotein (1770 aa).

3 stretches are compositionally biased toward polar residues: residues 1 to 11, 19 to 39, and 49 to 60; these read MESQQLHQNPH, ASVTSKEVPSNQDPLAVSASN, and KVNSQQETTPGT. Disordered regions lie at residues 1-86 and 360-453; these read MESQ…GQYQ and HSEY…LPDH. The segment at 295–397 is RNA-binding; sequence ENNINVSDRL…SSKPRAAKAH (103 aa). The segment covering 369 to 381 has biased composition (low complexity); sequence TSPNTTNTKVTTR. Polar residues predominate over residues 399-408; sequence IATSSKFSRV. The active-site For protease activity; shared with dimeric partner is D457. An integrase-type zinc finger-like region spans residues 579-636; that stretch reads NVNKSKSVNKYPYPLIHRMLGHANFRSIQKSLKKNAVTYLKESDIEWSNASTYQCPDC. One can recognise an Integrase catalytic domain in the interval 656–831; it reads ESYEPFQYLH…AGLDITTILP (176 aa). Mg(2+) contacts are provided by D667 and D732. Disordered regions lie at residues 1004 to 1034, 1059 to 1135, 1146 to 1165, and 1170 to 1205; these read MGGTVESDTTSPRHSSTFTARNQNRPGSTNE, TEEP…KSSK, LPLPDLTHKSPTDTSDVSKD, and HSRQTNSSLGGMDDSNVLTTTKSKKRSLEDNETEIE. 2 stretches are compositionally biased toward polar residues: residues 1009-1034 and 1065-1082; these read ESDTTSPRHSSTFTARNQNRPGSTNE and QRNSDTNIKYRTTNSTPS. The segment covering 1151–1165 has biased composition (basic and acidic residues); it reads LTHKSPTDTSDVSKD. A Bipartite nuclear localization signal motif is present at residues 1193–1227; that stretch reads KKRSLEDNETEIEVSRDTWNNKNMRSLEPPRSKKR. Residues 1353–1491 form the Reverse transcriptase Ty1/copia-type domain; the sequence is NDYYITQLDI…DILGLEIKYQ (139 aa). 6 residues coordinate Mg(2+): D1361, D1442, D1443, D1625, E1667, and D1700. The 143-residue stretch at 1625–1767 folds into the RNase H Ty1/copia-type domain; the sequence is DASYGNQPYY…IKTFKLLTNK (143 aa).

The capsid protein forms a homotrimer, from which the VLPs are assembled. The protease is a homodimer, whose active site consists of two apposed aspartic acid residues. In terms of processing, initially, virus-like particles (VLPs) are composed of the structural unprocessed proteins Gag and Gag-Pol, and also contain the host initiator methionine tRNA (tRNA(i)-Met) which serves as a primer for minus-strand DNA synthesis, and a dimer of genomic Ty RNA. Processing of the polyproteins occurs within the particle and proceeds by an ordered pathway, called maturation. First, the protease (PR) is released by autocatalytic cleavage of the Gag-Pol polyprotein, and this cleavage is a prerequisite for subsequent processing at the remaining sites to release the mature structural and catalytic proteins. Maturation takes place prior to the RT reaction and is required to produce transposition-competent VLPs.

The protein resides in the cytoplasm. Its subcellular location is the nucleus. It carries out the reaction DNA(n) + a 2'-deoxyribonucleoside 5'-triphosphate = DNA(n+1) + diphosphate. It catalyses the reaction Endonucleolytic cleavage to 5'-phosphomonoester.. Functionally, capsid protein (CA) is the structural component of the virus-like particle (VLP), forming the shell that encapsulates the retrotransposons dimeric RNA genome. The particles are assembled from trimer-clustered units and there are holes in the capsid shells that allow for the diffusion of macromolecules. CA also has nucleocapsid-like chaperone activity, promoting primer tRNA(i)-Met annealing to the multipartite primer-binding site (PBS), dimerization of Ty2 RNA and initiation of reverse transcription. The aspartyl protease (PR) mediates the proteolytic cleavages of the Gag and Gag-Pol polyproteins after assembly of the VLP. Its function is as follows. Reverse transcriptase/ribonuclease H (RT) is a multifunctional enzyme that catalyzes the conversion of the retro-elements RNA genome into dsDNA within the VLP. The enzyme displays a DNA polymerase activity that can copy either DNA or RNA templates, and a ribonuclease H (RNase H) activity that cleaves the RNA strand of RNA-DNA heteroduplexes during plus-strand synthesis and hydrolyzes RNA primers. The conversion leads to a linear dsDNA copy of the retrotransposon that includes long terminal repeats (LTRs) at both ends. In terms of biological role, integrase (IN) targets the VLP to the nucleus, where a subparticle preintegration complex (PIC) containing at least integrase and the newly synthesized dsDNA copy of the retrotransposon must transit the nuclear membrane. Once in the nucleus, integrase performs the integration of the dsDNA into the host genome. This chain is Transposon Ty2-GR1 Gag-Pol polyprotein (TY2B-GR1), found in Saccharomyces cerevisiae (strain ATCC 204508 / S288c) (Baker's yeast).